The chain runs to 238 residues: ATP synthase subunit a (238 aa).

5 helical membrane passes run 18–38 (LTLL…VFWA), 76–96 (YSLL…LGLF), 114–134 (NLAF…IEGV), 166–186 (SLAI…GLIV), and 193–213 (VYWW…SVFI).

It belongs to the ATPase A chain family. In terms of assembly, F-type ATPases have 2 components, CF(1) - the catalytic core - and CF(0) - the membrane proton channel. CF(1) has five subunits: alpha(3), beta(3), gamma(1), delta(1), epsilon(1). CF(0) has three main subunits: a(1), b(2) and c(9-12). The alpha and beta chains form an alternating ring which encloses part of the gamma chain. CF(1) is attached to CF(0) by a central stalk formed by the gamma and epsilon chains, while a peripheral stalk is formed by the delta and b chains.

It is found in the cell membrane. In terms of biological role, key component of the proton channel; it plays a direct role in the translocation of protons across the membrane. The protein is ATP synthase subunit a of Streptococcus pyogenes serotype M5 (strain Manfredo).